Reading from the N-terminus, the 508-residue chain is MGLPWYRVHTVVLNDPGRLISVHIMHTALVAGWAGSMALYELAVFDPSDPVLDPMWRQGMFVIPFMTRLGITNSWGGWSITGGTITNPGIWSYEGVAGAHIVFSGLCFLAAIWHWVYWDLEIFCDERTGKPSLDLPKIFGIHLFLSGLACFGFGAFHVTGLYGPGIWVSDPYGLTGKVQSVNPAWGVEGFDPFVPGGIASHHIAAGTLGILAGLFHLSVRPPQRLYKGLRMGNIETVLSSSIAAVFFAAFVVAGTMWYGSATTPIELFGPTRYQWDQGYFQQEIYRRVGAGLAENQSLSEAWSKIPEKLAFYDYIGNNPAKGGLFRAGSMDNGDGIAVGWLGHPIFRDKEGRELFVRRMPTFFETFPVVLVDGDGIVRADVPFRRAESKYSVEQVGVTVEFYGGELNGVSYSDPATVKKYARRAQLGEIFELDRATLKSDGVFRSSPRGWFTFGHASFALLFFFGHIWHGARTLFRDVFAGIDPDLDAQVEFGTFQKLGDPTTRRQVV.

Helical transmembrane passes span Ser21–Ser36, Ile101–Trp115, Gly140–Phe156, Ile203–Ser218, Val237–Val252, and Ser457–Arg472.

The protein belongs to the PsbB/PsbC family. PsbB subfamily. In terms of assembly, PSII is composed of 1 copy each of membrane proteins PsbA, PsbB, PsbC, PsbD, PsbE, PsbF, PsbH, PsbI, PsbJ, PsbK, PsbL, PsbM, PsbT, PsbX, PsbY, PsbZ, Psb30/Ycf12, at least 3 peripheral proteins of the oxygen-evolving complex and a large number of cofactors. It forms dimeric complexes. Binds multiple chlorophylls. PSII binds additional chlorophylls, carotenoids and specific lipids. is required as a cofactor.

It is found in the plastid. The protein resides in the chloroplast thylakoid membrane. Its function is as follows. One of the components of the core complex of photosystem II (PSII). It binds chlorophyll and helps catalyze the primary light-induced photochemical processes of PSII. PSII is a light-driven water:plastoquinone oxidoreductase, using light energy to abstract electrons from H(2)O, generating O(2) and a proton gradient subsequently used for ATP formation. The chain is Photosystem II CP47 reaction center protein from Vitis vinifera (Grape).